Here is a 152-residue protein sequence, read N- to C-terminus: Proline-rich acidic protein 1 (152 aa).

The signal sequence occupies residues 1-20 (MKRFLLATCLVAVLLWEAGA).

As to quaternary structure, interacts with MTTP. Interacts with MAD1L1. In terms of tissue distribution, highly expressed in the small intestine where it shows a proximal-distal graded expression.

The protein resides in the secreted. Its subcellular location is the endoplasmic reticulum. Lipid-binding protein which promotes lipid absorption by facilitating MTTP-mediated lipid transfer (mainly triglycerides and phospholipids) and MTTP-mediated apoB lipoprotein assembly and secretion. Protects the gastrointestinal epithelium from irradiation-induced apoptosis. May play an important role in maintaining normal growth homeostasis in epithelial cells. Involved in p53/TP53-dependent cell survival after DNA damage. The protein is Proline-rich acidic protein 1 (Prap1) of Rattus norvegicus (Rat).